Consider the following 580-residue polypeptide: Conglutin beta 3 (580 aa).

The N-terminal stretch at 1–30 is a signal peptide; that stretch reads MAKMRVRFPTLVLLLGIVFLMAVSIGIAYG. 2 stretches are compositionally biased toward basic and acidic residues: residues 37-72 and 79-92; these read NHER…RESE and REQR…REQE. The disordered stretch occupies residues 37-165; sequence NHERPQEREQ…DSRRQRNPYY (129 aa). The span at 124 to 133 shows a compositional bias: low complexity; the sequence is QGSSSSSRRQ. The span at 134–145 shows a compositional bias: basic and acidic residues; the sequence is SGYERREQREER. 2 Cupin type-1 domains span residues 164–322 and 381–538; these read YYFS…EEIQ and FNLR…EDVE. N-linked (GlcNAc...) asparagine glycosylation is found at asparagine 229 and asparagine 488. Positions 549–569 are disordered; that stretch reads FANAQPQQQQQREREGRHGRR.

It belongs to the 7S seed storage protein family. In terms of assembly, component of globulins complexes which accumulate in seeds.

Seed storage protein. Accumulates during seed development and is hydrolyzed after germination to provide a carbon and nitrogen source for the developing seedling. This is Conglutin beta 3 from Lupinus angustifolius (Narrow-leaved blue lupine).